The sequence spans 298 residues: Probable endonuclease 4 (298 aa).

Zn(2+) contacts are provided by His69, His111, Glu146, Asp180, His183, His215, Asp228, His230, and Glu260.

The protein belongs to the AP endonuclease 2 family. Zn(2+) is required as a cofactor.

The enzyme catalyses Endonucleolytic cleavage to 5'-phosphooligonucleotide end-products.. Endonuclease IV plays a role in DNA repair. It cleaves phosphodiester bonds at apurinic or apyrimidinic (AP) sites, generating a 3'-hydroxyl group and a 5'-terminal sugar phosphate. In Bacillus cereus (strain G9842), this protein is Probable endonuclease 4.